Consider the following 288-residue polypeptide: 2-hydroxy-6-oxononadienedioate/2-hydroxy-6-oxononatrienedioate hydrolase (288 aa).

Catalysis depends on H267, which acts as the Proton acceptor.

Belongs to the AB hydrolase superfamily. MhpC family. As to quaternary structure, homodimer.

It carries out the reaction (2Z,4E)-2-hydroxy-6-oxonona-2,4-dienedioate + H2O = (2Z)-2-hydroxypenta-2,4-dienoate + succinate + H(+). The catalysed reaction is (2Z,4E,7E)-2-hydroxy-6-oxonona-2,4,7-trienedioate + H2O = (2Z)-2-hydroxypenta-2,4-dienoate + fumarate + H(+). The protein operates within aromatic compound metabolism; 3-phenylpropanoate degradation. In terms of biological role, catalyzes the cleavage of the C5-C6 bond of 2-hydroxy-6-oxononadienedioate and 2-hydroxy-6-oxononatrienedioate, a dienol ring fission product of the bacterial meta-cleavage pathway for degradation of phenylpropionic acid. This is 2-hydroxy-6-oxononadienedioate/2-hydroxy-6-oxononatrienedioate hydrolase from Escherichia coli (strain K12 / DH10B).